The following is a 216-amino-acid chain: Ribonuclease HII (216 aa).

One can recognise an RNase H type-2 domain in the interval 33-216 (WPVAGADEAG…RMSFRPFRQL (184 aa)). Residues Asp39, Glu40, and Asp130 each contribute to the a divalent metal cation site.

It belongs to the RNase HII family. Mn(2+) serves as cofactor. It depends on Mg(2+) as a cofactor.

The protein resides in the cytoplasm. The catalysed reaction is Endonucleolytic cleavage to 5'-phosphomonoester.. Functionally, endonuclease that specifically degrades the RNA of RNA-DNA hybrids. This chain is Ribonuclease HII, found in Sinorhizobium medicae (strain WSM419) (Ensifer medicae).